A 493-amino-acid chain; its full sequence is MQFKQDFFEQLEGFYSQVYPLPISNPHWLGWSDDAAQLIGLEKPNAELLMQLSANYAAPGASYYAQVYSGHQFGGYTPRLGDGRSIILGEAIGPNGAWDVALKGGGPTPYSRQGDGRAVMRSAVREFLVSEALAALNVPTSRALAVIGSDLPVWRESQETAAITVRLAKSHIRFGHFEYFFHSEQGDAAKLTQLVNFTIQQHFPHLSTDAAGYKQWFYEVVQSTAKMIAHWQSVGFAHGVMNTDNMSILGDTFDFGPFAFLDTFKEGFICNHSDHEGRYAFGQQPGIGLWNLKRLAQTLTPIIESDDLIAALNTYQFELVQQYLLLMRAKLGFSQPNQSPNAINAEEQADLGNKDLQLVGQLTGLLETNQLDYTNSLRRFGQLDPSSAHSSLRDDMVDLAGFDTWYQAYQSRVGEVADVNAWQCERNSANPKYILRNYLAQEAIIAIEENGDNSKLLQLQQLLQRPFDEQSEMEDFAKRPPQWGQGLIMSCSS.

Gly-81, Gly-83, Arg-84, Lys-103, Asp-115, Gly-116, Arg-166, and Arg-173 together coordinate ATP. The active-site Proton acceptor is Asp-244. Mg(2+)-binding residues include Asn-245 and Asp-254. Asp-254 is a binding site for ATP.

It belongs to the SELO family. Mg(2+) is required as a cofactor. The cofactor is Mn(2+).

The enzyme catalyses L-seryl-[protein] + ATP = 3-O-(5'-adenylyl)-L-seryl-[protein] + diphosphate. It carries out the reaction L-threonyl-[protein] + ATP = 3-O-(5'-adenylyl)-L-threonyl-[protein] + diphosphate. The catalysed reaction is L-tyrosyl-[protein] + ATP = O-(5'-adenylyl)-L-tyrosyl-[protein] + diphosphate. It catalyses the reaction L-histidyl-[protein] + UTP = N(tele)-(5'-uridylyl)-L-histidyl-[protein] + diphosphate. The enzyme catalyses L-seryl-[protein] + UTP = O-(5'-uridylyl)-L-seryl-[protein] + diphosphate. It carries out the reaction L-tyrosyl-[protein] + UTP = O-(5'-uridylyl)-L-tyrosyl-[protein] + diphosphate. Functionally, nucleotidyltransferase involved in the post-translational modification of proteins. It can catalyze the addition of adenosine monophosphate (AMP) or uridine monophosphate (UMP) to a protein, resulting in modifications known as AMPylation and UMPylation. The chain is Protein nucleotidyltransferase YdiU from Shewanella frigidimarina (strain NCIMB 400).